Here is a 219-residue protein sequence, read N- to C-terminus: Octanoyltransferase (219 aa).

A BPL/LPL catalytic domain is found at 32–207; that stretch reads SSSPDQLWIV…TFSHNLGYQN (176 aa). Residues 71 to 78, 138 to 140, and 151 to 153 each bind substrate; these read RGGQVTYH, SLG, and GLA. C169 serves as the catalytic Acyl-thioester intermediate.

Belongs to the LipB family.

The protein localises to the cytoplasm. It catalyses the reaction octanoyl-[ACP] + L-lysyl-[protein] = N(6)-octanoyl-L-lysyl-[protein] + holo-[ACP] + H(+). The protein operates within protein modification; protein lipoylation via endogenous pathway; protein N(6)-(lipoyl)lysine from octanoyl-[acyl-carrier-protein]: step 1/2. Catalyzes the transfer of endogenously produced octanoic acid from octanoyl-acyl-carrier-protein onto the lipoyl domains of lipoate-dependent enzymes. Lipoyl-ACP can also act as a substrate although octanoyl-ACP is likely to be the physiological substrate. This is Octanoyltransferase from Shewanella woodyi (strain ATCC 51908 / MS32).